A 338-amino-acid polypeptide reads, in one-letter code: Aspartate carbamoyltransferase catalytic subunit (338 aa).

2 residues coordinate carbamoyl phosphate: arginine 59 and threonine 60. Position 87 (lysine 87) interacts with L-aspartate. Positions 109, 142, and 145 each coordinate carbamoyl phosphate. Residues arginine 182 and arginine 253 each coordinate L-aspartate. Carbamoyl phosphate contacts are provided by glycine 294 and proline 295.

Belongs to the aspartate/ornithine carbamoyltransferase superfamily. ATCase family. Heterododecamer (2C3:3R2) of six catalytic PyrB chains organized as two trimers (C3), and six regulatory PyrI chains organized as three dimers (R2).

The enzyme catalyses carbamoyl phosphate + L-aspartate = N-carbamoyl-L-aspartate + phosphate + H(+). It functions in the pathway pyrimidine metabolism; UMP biosynthesis via de novo pathway; (S)-dihydroorotate from bicarbonate: step 2/3. Functionally, catalyzes the condensation of carbamoyl phosphate and aspartate to form carbamoyl aspartate and inorganic phosphate, the committed step in the de novo pyrimidine nucleotide biosynthesis pathway. The polypeptide is Aspartate carbamoyltransferase catalytic subunit (Prochlorococcus marinus subsp. pastoris (strain CCMP1986 / NIES-2087 / MED4)).